The sequence spans 151 residues: Small ribosomal subunit protein uS15 (151 aa).

The segment at 1–20 (MARLHSGKRGSSGSTRPLRT) is disordered.

Belongs to the universal ribosomal protein uS15 family. In terms of assembly, part of the 30S ribosomal subunit.

The polypeptide is Small ribosomal subunit protein uS15 (Methanococcus maripaludis (strain DSM 14266 / JCM 13030 / NBRC 101832 / S2 / LL)).